Here is a 156-residue protein sequence, read N- to C-terminus: MGIKAAVFEIKATCYAHEGFNDESPSVQGAALEQLGKDMVDHLLENGVDDVKIKGDYVEELEVEKPIMKYFEVFDPYYALIKAYTKEKAMELYTDTVTDDDDGELSDEMTEVGQVYAAIQHGRAPGEDKELMPFKQVLEEISNDEEMVLLIDGSLL.

The chain is SPbeta prophage-derived uncharacterized protein YosH (yosH) from Bacillus subtilis (strain 168).